A 351-amino-acid chain; its full sequence is Caveolin-2 (351 aa).

Residues 1–14 (MTRQNTSESDNTQR) are compositionally biased toward polar residues. 3 disordered regions span residues 1-55 (MTRQ…QGIA), 71-93 (HRTSLNQEVPTPQRRSHPQYDNL), and 144-193 (QKGS…PEME). The Cytoplasmic portion of the chain corresponds to 1–261 (MTRQNTSESD…FEIVRIYSYK (261 aa)). Residues 22-31 (TVDDIDELTD) are compositionally biased toward acidic residues. Basic residues predominate over residues 38–51 (HHHHHHHHEHHHQH). A compositionally biased stretch (low complexity) spans 167 to 184 (PAQQSAPPTQQSRPQTTS). Positions 262–290 (ILTLIFGLIIAFLGGILFALFAFLNIWIF) form an intramembrane region, helical. Residues 291-351 (RPILILTRMA…EVWEKHIHHV (61 aa)) are Cytoplasmic-facing.

This sequence belongs to the caveolin family. Homooligomer. In terms of tissue distribution, expressed in intracellular bodies in intestinal cells.

The protein resides in the golgi apparatus membrane. Its subcellular location is the cell membrane. It is found in the membrane. The protein localises to the caveola. It localises to the apical cell membrane. In terms of biological role, may act as a scaffolding protein within caveolar membranes. Interacts directly with G-protein alpha subunits and can regulate their activity. Thought to have a role in the uptake of lipids and proteins in the intestinal cells; operates in the apical uptake of lipid markers and trafficking of yolk proteins. Affects fecundity and egg laying. The protein is Caveolin-2 (cav-2) of Caenorhabditis elegans.